The following is a 610-amino-acid chain: Glutamine--fructose-6-phosphate aminotransferase [isomerizing] (610 aa).

The Nucleophile; for GATase activity role is filled by Cys2. One can recognise a Glutamine amidotransferase type-2 domain in the interval 2–218; that stretch reads CGIVGAVAQR…EGDVAEITRR (217 aa). 2 consecutive SIS domains span residues 286-426 and 459-600; these read AAEI…QQGR and LATD…VDQP. Lys605 serves as the catalytic For Fru-6P isomerization activity.

As to quaternary structure, homodimer.

It is found in the cytoplasm. It carries out the reaction D-fructose 6-phosphate + L-glutamine = D-glucosamine 6-phosphate + L-glutamate. In terms of biological role, catalyzes the first step in hexosamine metabolism, converting fructose-6P into glucosamine-6P using glutamine as a nitrogen source. The polypeptide is Glutamine--fructose-6-phosphate aminotransferase [isomerizing] (Vibrio vulnificus (strain YJ016)).